The following is a 626-amino-acid chain: Chaperone protein HtpG (626 aa).

The tract at residues 1–339 is a; substrate-binding; that stretch reads MSQNQETRGF…SNDLPLNVSR (339 aa). The interval 340–555 is b; sequence EILQDNKITA…NDQMTTQMAK (216 aa). Residues 556-626 are c; it reads LFAAAGQPVP…FIKRINKLLG (71 aa).

It belongs to the heat shock protein 90 family. Homodimer.

Its subcellular location is the cytoplasm. Functionally, molecular chaperone. Has ATPase activity. This Haemophilus influenzae (strain PittEE) protein is Chaperone protein HtpG.